The following is a 317-amino-acid chain: Melanocyte-stimulating hormone receptor (317 aa).

The interval 1–23 (MSGQGPQRRLLGSPNATSPTTPH) is disordered. The Extracellular segment spans residues 1–37 (MSGQGPQRRLLGSPNATSPTTPHFKLAANQTGPRCLE). Residue Asn29 is glycosylated (N-linked (GlcNAc...) asparagine). A helical membrane pass occupies residues 38 to 63 (VSIPNGLFLSLGLVSVVENVLVVAAI). Residues 64 to 72 (AKNRNLHSP) lie on the Cytoplasmic side of the membrane. Residues 73-93 (MYYFIGCLAVSDLLVSVTNVL) traverse the membrane as a helical segment. Topologically, residues 94 to 118 (ETAVMLLVEAGALAAQAAVVQQLDD) are extracellular. A helical transmembrane segment spans residues 119–140 (IIDVLICGSMVSSLCFLGAIAV). Topologically, residues 141–163 (DRYLSIFYALRYHSIVTLPRAWR) are cytoplasmic. Residues 164–183 (AISAIWVASVLSSTLFIAYY) traverse the membrane as a helical segment. Topologically, residues 184–191 (NHTAVLLC) are extracellular. The helical transmembrane segment at 192–211 (LVSFFVAMLVLMAVLYVHML) threads the bilayer. Residues 212-240 (ARARQHARGIARLRKRQHSVHQGFGLKGA) lie on the Cytoplasmic side of the membrane. A helical membrane pass occupies residues 241–266 (ATLTILLGIFFLCWGPFFLHLSLMVL). Topologically, residues 267 to 279 (CPQHPICGCVFQN) are extracellular. A helical membrane pass occupies residues 280-300 (FNLFLTLIICNSIIDPFIYAF). The Cytoplasmic portion of the chain corresponds to 301 to 317 (RSQELRKTLQEVVLCSW). Cys315 is lipidated: S-palmitoyl cysteine.

Belongs to the G-protein coupled receptor 1 family. As to quaternary structure, interacts with MGRN1, but does not undergo MGRN1-mediated ubiquitination; this interaction competes with GNAS-binding and thus inhibits agonist-induced cAMP production. Interacts with OPN3; the interaction results in a decrease in MC1R-mediated cAMP signaling and ultimately a decrease in melanin production in melanocytes.

It is found in the cell membrane. Receptor for MSH (alpha, beta and gamma) and ACTH. The activity of this receptor is mediated by G proteins which activate adenylate cyclase. Mediates melanogenesis, the production of eumelanin (black/brown) and phaeomelanin (red/yellow), via regulation of cAMP signaling in melanocytes. The protein is Melanocyte-stimulating hormone receptor (MC1R) of Vulpes vulpes (Red fox).